We begin with the raw amino-acid sequence, 821 residues long: Elongator complex protein 2 (821 aa).

WD repeat units lie at residues 56 to 100 (GHTA…VLKS), 105 to 152 (GHEG…VKCL), 160 to 200 (GFVL…FQKM), 205 to 246 (GHED…TSLE), 280 to 328 (GHEN…GVWL), 338 to 377 (GNTLGFYGCQFGENGSMIIAHAFHGAMHLWKQSTVNPRQW), 385 to 424 (GHFDGVQDLIWDPEGEFIITTSTDQTTRLFAPWKKKNQSQ), 435 to 473 (IHGYNLKCLAMIDRFQFVSGADEKVLRVFSAPRNFVENF), 563 to 607 (GHGY…QVQS), 610 to 649 (YHTLTVTQMAFSPDDKFLLAVSRDRTWSLWKRQDVTSAEF), 665 to 704 (VHSRIIWSCDWSPDSKYFFTGSRDKKVVVWGECNSSYNPM), 716 to 760 (DVGS…QETK), and 773 to 821 (SHTL…RCAL).

The protein belongs to the WD repeat ELP2 family. Component of the elongator complex which consists of ELP1, ELP2, ELP3, ELP4, ELP5 and ELP6. Interacts with STAT3 and JAKs.

The protein localises to the cytoplasm. It localises to the nucleus. It functions in the pathway tRNA modification; 5-methoxycarbonylmethyl-2-thiouridine-tRNA biosynthesis. In terms of biological role, component of the elongator complex which is required for multiple tRNA modifications, including mcm5U (5-methoxycarbonylmethyl uridine), mcm5s2U (5-methoxycarbonylmethyl-2-thiouridine), and ncm5U (5-carbamoylmethyl uridine). The elongator complex catalyzes the formation of carboxymethyluridine in the wobble base at position 34 in tRNAs. This Rattus norvegicus (Rat) protein is Elongator complex protein 2 (Elp2).